A 73-amino-acid chain; its full sequence is UPF0352 protein HD_1515 (73 aa).

This sequence belongs to the UPF0352 family.

The chain is UPF0352 protein HD_1515 from Haemophilus ducreyi (strain 35000HP / ATCC 700724).